Consider the following 116-residue polypeptide: Flagellar hook-basal body complex protein FliE (116 aa).

Belongs to the FliE family.

Its subcellular location is the bacterial flagellum basal body. This Rhizobium rhizogenes (strain K84 / ATCC BAA-868) (Agrobacterium radiobacter) protein is Flagellar hook-basal body complex protein FliE.